Here is a 393-residue protein sequence, read N- to C-terminus: Double-stranded RNA-binding protein 5 (393 aa).

DRBM domains lie at 1–70 (MYKN…VLSS) and 87–155 (IYKN…SLKK). 2 disordered regions span residues 220–251 (ASSSSSTSTPNQHKNSSFISLIPPPPPPKSSK) and 335–371 (NPNLNPSSLSSSVNEFTSSNNSCSVLNTPGLGGQEKK). Over residues 347–361 (VNEFTSSNNSCSVLN) the composition is skewed to polar residues.

In terms of assembly, heterodimer with DRB1, DRB2 or DRB4. Interacts with DCL1 and DCL3. Expressed in the shoot apical meristem (SAM).

Its function is as follows. Binds double-stranded RNA. May be involved in RNA-mediated silencing. This chain is Double-stranded RNA-binding protein 5 (DRB5), found in Arabidopsis thaliana (Mouse-ear cress).